The following is a 626-amino-acid chain: NAD-dependent malic enzyme, mitochondrial (626 aa).

Residues 1–34 (MAIFSNQMRLSSTLLKRLHQRVAAAVNSSSSRNF) constitute a mitochondrion transit peptide. 2 residues coordinate fumarate: arginine 91 and arginine 125. Tyrosine 146 functions as the Proton donor in the catalytic mechanism. Arginine 199 is a binding site for (S)-malate. An NAD(+)-binding site is contributed by arginine 199. Residue lysine 217 is the Proton acceptor of the active site. A divalent metal cation-binding residues include glutamate 288, aspartate 289, and aspartate 312. NAD(+)-binding residues include alanine 348 and alanine 351. (S)-malate contacts are provided by asparagine 467 and asparagine 512.

The protein belongs to the malic enzymes family. As to quaternary structure, heterodimer of two related subunits. Mg(2+) is required as a cofactor. Mn(2+) serves as cofactor.

Its subcellular location is the mitochondrion matrix. It carries out the reaction (S)-malate + NAD(+) = pyruvate + CO2 + NADH. The protein is NAD-dependent malic enzyme, mitochondrial of Solanum tuberosum (Potato).